The following is a 335-amino-acid chain: MANSNNQLLKEIRYDWNREEILQILNMPLIDLMWEAQIVHRKFNKYDIQLASLFSVKTGGCEENCSYCSQSIYSASEIKSHPQFQVEEVLARAKVAKNEGADRFCMGWAWREIRDGKSFNAMLEMVSGVRDLGMEACVTAGMLTEEQASRLADAGLTAYNHNLDTSPEHYKNIITTRTYQDRLDTIKRVRNAGINVCCGGIIGLGETNGDRASLLEVLSNMNPHPESVPINSLVAIEGTGLEDTQEIDSIEMIRMIATARILMPESKIRLSAGREKLTKEAQILCFQCGANSIFYGDELLTTSNPSFQSDRKLLKEVGVSFNKDFETCEKTLSSL.

Residues 46-274 (YDIQLASLFS…ESKIRLSAGR (229 aa)) form the Radical SAM core domain. Positions 61, 65, and 68 each coordinate [4Fe-4S] cluster. Cys-105, Cys-137, Cys-197, and Arg-269 together coordinate [2Fe-2S] cluster.

Belongs to the radical SAM superfamily. Biotin synthase family. In terms of assembly, homodimer. [4Fe-4S] cluster is required as a cofactor. [2Fe-2S] cluster serves as cofactor.

It catalyses the reaction (4R,5S)-dethiobiotin + (sulfur carrier)-SH + 2 reduced [2Fe-2S]-[ferredoxin] + 2 S-adenosyl-L-methionine = (sulfur carrier)-H + biotin + 2 5'-deoxyadenosine + 2 L-methionine + 2 oxidized [2Fe-2S]-[ferredoxin]. Its pathway is cofactor biosynthesis; biotin biosynthesis; biotin from 7,8-diaminononanoate: step 2/2. Its function is as follows. Catalyzes the conversion of dethiobiotin (DTB) to biotin by the insertion of a sulfur atom into dethiobiotin via a radical-based mechanism. The chain is Biotin synthase from Prochlorococcus marinus (strain MIT 9301).